A 48-amino-acid chain; its full sequence is 2-deoxy-glucose resistant protein 1, mitochondrial (48 aa).

The transit peptide at methionine 1–glutamine 28 directs the protein to the mitochondrion.

It localises to the mitochondrion. The protein is 2-deoxy-glucose resistant protein 1, mitochondrial (DGR1) of Saccharomyces cerevisiae (strain ATCC 204508 / S288c) (Baker's yeast).